A 277-amino-acid chain; its full sequence is Transcription antiterminator LicT (277 aa).

2 PRD domains span residues 65–170 (DIPI…EEMP) and 171–277 (NIIN…VKQA).

It belongs to the transcriptional antiterminator BglG family. Post-translationally, phosphorylated.

Mediates positive regulation of the glucanase operon (licST) by functioning as an antiterminator factor of transcription. Prevents termination at terminator lic-t. The protein is Transcription antiterminator LicT (licT) of Bacillus subtilis (strain 168).